We begin with the raw amino-acid sequence, 639 residues long: mRNA export factor (639 aa).

Disordered regions lie at residues 1–45, 63–287, and 322–355; these read MQAE…SLES, LLGD…KWGA, and CTAR…SQPR. Over residues 142–152 the composition is skewed to basic residues; the sequence is PRRRTHARSRS. Residues 153–169 show a composition bias toward low complexity; that stretch reads PRAGSTSSQQPPSSSGG. Residues 175–189 are compositionally biased toward basic and acidic residues; sequence VRREAGDRETSEKPA. The span at 203–215 shows a compositional bias: polar residues; that stretch reads HQCQSPPAQTASQ. 2 stretches are compositionally biased toward basic and acidic residues: residues 234–247 and 326–348; these read RTPH…HEGA and DPAR…ERRT. Residues C525, H606, C610, and C615 each coordinate Zn(2+). The CHC2-type zinc finger occupies 525-615; the sequence is CHLAASKSPL…HANVCRKEEC (91 aa).

The protein belongs to the HHV-1 ICP27 protein family.

It localises to the host cytoplasm. It is found in the host nucleus. Its function is as follows. Multifunctional regulator of the expression of viral genes that mediates nuclear export of viral intronless mRNAs. This immediate early (EI) protein promotes the nuclear export of viral intronless mRNAs. The protein is mRNA export factor of Amazona oratrix (yellow-headed parrot).